Reading from the N-terminus, the 723-residue chain is Fatty acid oxidation complex subunit alpha (723 aa).

The tract at residues 1–189 is enoyl-CoA hydratase/isomerase; it reads MIYQAETLQV…KIGLLDAVVD (189 aa). Residue Asp296 coordinates substrate. A 3-hydroxyacyl-CoA dehydrogenase region spans residues 311-723; that stretch reads NKETQRAAVL…FYGAQQQGSI (413 aa). Residues Met325, Asp344, 401 to 403, Lys408, and Ser430 each bind NAD(+); that span reads VVE. His451 (for 3-hydroxyacyl-CoA dehydrogenase activity) is an active-site residue. Asn454 provides a ligand contact to NAD(+). Substrate is bound by residues Asn501 and Tyr661.

In the N-terminal section; belongs to the enoyl-CoA hydratase/isomerase family. This sequence in the C-terminal section; belongs to the 3-hydroxyacyl-CoA dehydrogenase family. Heterotetramer of two alpha chains (FadB) and two beta chains (FadA).

The enzyme catalyses a (3S)-3-hydroxyacyl-CoA + NAD(+) = a 3-oxoacyl-CoA + NADH + H(+). The catalysed reaction is a (3S)-3-hydroxyacyl-CoA = a (2E)-enoyl-CoA + H2O. It carries out the reaction a 4-saturated-(3S)-3-hydroxyacyl-CoA = a (3E)-enoyl-CoA + H2O. It catalyses the reaction (3S)-3-hydroxybutanoyl-CoA = (3R)-3-hydroxybutanoyl-CoA. The enzyme catalyses a (3Z)-enoyl-CoA = a 4-saturated (2E)-enoyl-CoA. The catalysed reaction is a (3E)-enoyl-CoA = a 4-saturated (2E)-enoyl-CoA. The protein operates within lipid metabolism; fatty acid beta-oxidation. Its function is as follows. Involved in the aerobic and anaerobic degradation of long-chain fatty acids via beta-oxidation cycle. Catalyzes the formation of 3-oxoacyl-CoA from enoyl-CoA via L-3-hydroxyacyl-CoA. It can also use D-3-hydroxyacyl-CoA and cis-3-enoyl-CoA as substrate. The polypeptide is Fatty acid oxidation complex subunit alpha (Vibrio vulnificus (strain YJ016)).